Consider the following 455-residue polypeptide: Chromosomal replication initiator protein DnaA (455 aa).

The domain I, interacts with DnaA modulators stretch occupies residues 1-70; the sequence is MTNETWVQVR…RMRLTEAGSP (70 aa). Residues 70 to 113 form a domain II region; sequence PVERLEFAVSNTPRAPLKEVKAAAPAASPARARPAPPEEDLRGA. The disordered stretch occupies residues 87 to 109; it reads KEVKAAAPAASPARARPAPPEED. The span at 91-102 shows a compositional bias: low complexity; the sequence is AAAPAASPARAR. A domain III, AAA+ region region spans residues 114–335; that stretch reads PLDARFTFDS…GALTRLFAFA (222 aa). ATP-binding residues include Gly158, Gly160, Lys161, and Thr162. The tract at residues 336-455 is domain IV, binds dsDNA; that stretch reads SLVGREITLD…LQLLRRLLQA (120 aa).

The protein belongs to the DnaA family. As to quaternary structure, oligomerizes as a right-handed, spiral filament on DNA at oriC.

Its subcellular location is the cytoplasm. In terms of biological role, plays an essential role in the initiation and regulation of chromosomal replication. ATP-DnaA binds to the origin of replication (oriC) to initiate formation of the DNA replication initiation complex once per cell cycle. Binds the DnaA box (a 9 base pair repeat at the origin) and separates the double-stranded (ds)DNA. Forms a right-handed helical filament on oriC DNA; dsDNA binds to the exterior of the filament while single-stranded (ss)DNA is stabiized in the filament's interior. The ATP-DnaA-oriC complex binds and stabilizes one strand of the AT-rich DNA unwinding element (DUE), permitting loading of DNA polymerase. After initiation quickly degrades to an ADP-DnaA complex that is not apt for DNA replication. Binds acidic phospholipids. In Cereibacter sphaeroides (strain ATCC 17029 / ATH 2.4.9) (Rhodobacter sphaeroides), this protein is Chromosomal replication initiator protein DnaA.